The sequence spans 570 residues: Frizzled-2 (570 aa).

The N-terminal stretch at 1 to 28 (MRARSALPRSALPRLLLPLLLLPAAGPA) is a signal peptide. Topologically, residues 29-252 (QFHGEKGISI…HHHTRFARLW (224 aa)) are extracellular. The FZ domain occupies 39–158 (PDHGFCQPIS…HGAEQICVGQ (120 aa)). 5 disulfides stabilise this stretch: Cys44–Cys105, Cys52–Cys98, Cys89–Cys126, Cys115–Cys155, and Cys119–Cys143. A glycan (N-linked (GlcNAc...) asparagine) is linked at Asn58. Asn159 carries N-linked (GlcNAc...) asparagine glycosylation. The disordered stretch occupies residues 166 to 194 (PALLTTAPPSGLQPGAGGTPGGPGGGGAP). The span at 179-193 (PGAGGTPGGPGGGGA) shows a compositional bias: gly residues. Residues 253–273 (ILTWSVLCCASTFFTVTTSLV) form a helical membrane-spanning segment. The Cytoplasmic segment spans residues 274 to 284 (AMQRFRYPERP). Residues 285 to 305 (IIFLSGCYTMVSVAYIAGFVL) traverse the membrane as a helical segment. At 306–332 (QERVVCNERFSEDGYRTVGQGTKKEGC) the chain is on the extracellular side. A helical transmembrane segment spans residues 333 to 353 (TILFMMLYFFSMASSIWWVIL). The Cytoplasmic portion of the chain corresponds to 354–375 (SLTWFLAAGMKWGHAAIEANSQ). A helical membrane pass occupies residues 376 to 396 (YFHLAAWAVPAVKTITILAMG). Topologically, residues 397–419 (QIDGDLLSGVCFVGLNRLDPLRG) are extracellular. The helical transmembrane segment at 420 to 440 (FVLAPLFVYLFIGTSFLLAGF) threads the bilayer. At 441-466 (VSLFRIRTIMKHDGTKTEPLERLMVR) the chain is on the cytoplasmic side. A helical membrane pass occupies residues 467-487 (IGVFSVLYTVPATIVIACYFY). At 488 to 524 (EQAFREHWERSWVSQHCKSLAIPCPAHYTPRTSPDFT) the chain is on the extracellular side. The helical transmembrane segment at 525–545 (VYMIKYLMTLIVGITSGFWIW) threads the bilayer. The Cytoplasmic segment spans residues 546–570 (SGKTLHSWRKFYTRLTNSRHGETTV). Positions 548 to 553 (KTLHSW) match the Lys-Thr-X-X-X-Trp motif, mediates interaction with the PDZ domain of Dvl family members motif. The short motif at 568–570 (TTV) is the PDZ-binding element.

The protein belongs to the G-protein coupled receptor Fz/Smo family. In terms of processing, ubiquitinated by ZNRF3, leading to its degradation by the proteasome. As to expression, widely expressed. Most abundant in kidney, liver, uterus, ovary and heart. Lower levels seen in brain and intestine. Extremely low in calvaria, mammary glands and testis.

It localises to the membrane. It is found in the cell membrane. Its function is as follows. Receptor for Wnt proteins. Most of frizzled receptors are coupled to the beta-catenin canonical signaling pathway, which leads to the activation of disheveled proteins, inhibition of GSK-3 kinase, nuclear accumulation of beta-catenin and activation of Wnt target genes. A second signaling pathway involving PKC and calcium fluxes has been seen for some family members, but it is not yet clear if it represents a distinct pathway or if it can be integrated in the canonical pathway, as PKC seems to be required for Wnt-mediated inactivation of GSK-3 kinase. Both pathways seem to involve interactions with G-proteins. May be involved in transduction and intercellular transmission of polarity information during tissue morphogenesis and/or in differentiated tissues. Activation by Wnt5A stimulates PKC activity via a G-protein-dependent mechanism. This is Frizzled-2 (Fzd2) from Rattus norvegicus (Rat).